The sequence spans 460 residues: UDP-N-acetylmuramate--L-alanine ligase (460 aa).

Position 118-124 (118-124 (GTHGKTT)) interacts with ATP.

It belongs to the MurCDEF family.

The protein localises to the cytoplasm. It catalyses the reaction UDP-N-acetyl-alpha-D-muramate + L-alanine + ATP = UDP-N-acetyl-alpha-D-muramoyl-L-alanine + ADP + phosphate + H(+). It functions in the pathway cell wall biogenesis; peptidoglycan biosynthesis. Functionally, cell wall formation. This is UDP-N-acetylmuramate--L-alanine ligase from Gloeobacter violaceus (strain ATCC 29082 / PCC 7421).